We begin with the raw amino-acid sequence, 421 residues long: D-amino acid dehydrogenase (421 aa).

3 to 17 lines the FAD pocket; sequence ILILGSGVVGTASAY.

This sequence belongs to the DadA oxidoreductase family. It depends on FAD as a cofactor.

It catalyses the reaction a D-alpha-amino acid + A + H2O = a 2-oxocarboxylate + AH2 + NH4(+). The protein operates within amino-acid degradation; D-alanine degradation; NH(3) and pyruvate from D-alanine: step 1/1. In terms of biological role, oxidative deamination of D-amino acids. This Xanthobacter autotrophicus (strain ATCC BAA-1158 / Py2) protein is D-amino acid dehydrogenase.